Consider the following 428-residue polypeptide: Enolase (428 aa).

Gln167 contacts (2R)-2-phosphoglycerate. Catalysis depends on Glu209, which acts as the Proton donor. The Mg(2+) site is built by Asp246, Glu289, and Asp316. The (2R)-2-phosphoglycerate site is built by Lys341, Arg370, Ser371, and Lys392. Lys341 (proton acceptor) is an active-site residue.

It belongs to the enolase family. As to quaternary structure, component of the RNA degradosome, a multiprotein complex involved in RNA processing and mRNA degradation. Mg(2+) is required as a cofactor.

The protein resides in the cytoplasm. It is found in the secreted. Its subcellular location is the cell surface. The catalysed reaction is (2R)-2-phosphoglycerate = phosphoenolpyruvate + H2O. It participates in carbohydrate degradation; glycolysis; pyruvate from D-glyceraldehyde 3-phosphate: step 4/5. Catalyzes the reversible conversion of 2-phosphoglycerate (2-PG) into phosphoenolpyruvate (PEP). It is essential for the degradation of carbohydrates via glycolysis. The chain is Enolase from Saccharophagus degradans (strain 2-40 / ATCC 43961 / DSM 17024).